Reading from the N-terminus, the 655-residue chain is Kelch-like protein 13 (655 aa).

The BTB domain occupies 92-161 (CDVTLMPGDT…IYTAKLSLNM (70 aa)). A BACK domain is found at 196-297 (CVEVGRIANT…TPQELINYVQ (102 aa)). 6 Kelch repeats span residues 341–389 (HLVT…VIGN), 390–441 (FLYV…ALKG), 442–488 (YLYA…VYGG), 490–535 (MYIS…TVGE), 537–587 (LYVI…VFEN), and 588–636 (KIYV…TLTV).

Component of the BCR(KLHL9-KLHL13) E3 ubiquitin ligase complex, at least composed of CUL3, KLHL9, KLHL13 and RBX1. Interacts with AURKB.

Its pathway is protein modification; protein ubiquitination. Substrate-specific adapter of a BCR (BTB-CUL3-RBX1) E3 ubiquitin-protein ligase complex required for mitotic progression and cytokinesis. The BCR(KLHL9-KLHL13) E3 ubiquitin ligase complex mediates the ubiquitination of AURKB and controls the dynamic behavior of AURKB on mitotic chromosomes and thereby coordinates faithful mitotic progression and completion of cytokinesis. The polypeptide is Kelch-like protein 13 (KLHL13) (Homo sapiens (Human)).